A 3746-amino-acid chain; its full sequence is N-(5-amino-5-carboxypentanoyl)-L-cysteinyl-D-valine synthase (3746 aa).

Residues 299 to 711 (EEVVERHEDK…GRADFQIKLR (413 aa)) form an adenylation (A) domain 1 region. Positions 818 to 895 (DLRGDTEIAL…RMADLLQNKQ (78 aa)) constitute a Carrier 1 domain. Residue Ser855 is modified to O-(pantetheine 4'-phosphoryl)serine. The segment at 918 to 1372 (NIYLANSLQQ…YLSSIQLEQL (455 aa)) is condensation (C) domain 1. The adenylation (A) domain 2 stretch occupies residues 1391–1801 (FENEASQKPD…GRNDFQVKIR (411 aa)). A Carrier 2 domain is found at 1902-1979 (PPRSEIERSL…AQTHLILNDA (78 aa)). O-(pantetheine 4'-phosphoryl)serine is present on Ser1939. The tract at residues 1994–2434 (QMIPVSRAQE…SELSAEGINE (441 aa)) is condensation (C) domain 2. Positions 2478–2883 (AFLAAEKIAV…GRGDLQIKMR (406 aa)) are adenylation (A) domain 3. Positions 2991 to 3066 (PPRNIIEAKM…ALHDHVFMKD (76 aa)) constitute a Carrier 3 domain. Ser3026 is modified (O-(pantetheine 4'-phosphoryl)serine). The epimerase (E) domain stretch occupies residues 3084-3500 (GEAPLLPIQD…NKILDGRASQ (417 aa)). The interval 3530–3732 (TLFLLPPGEG…FSWVGNPQQV (203 aa)) is thioesterase (TE) domain.

It belongs to the NRP synthetase family. Requires pantetheine 4'-phosphate as cofactor. Mg(2+) serves as cofactor.

Its subcellular location is the cytoplasm. It localises to the cytosol. The protein localises to the vacuole membrane. It carries out the reaction L-2-aminoadipate + L-valine + L-cysteine + 3 ATP + H2O = N-[(5S)-5-amino-5-carboxypentanoyl]-L-cysteinyl-D-valine + 3 AMP + 3 diphosphate + 3 H(+). Its pathway is antibiotic biosynthesis; penicillin G biosynthesis; penicillin G from L-alpha-aminoadipate and L-cysteine and L-valine: step 1/3. Functionally, nonribosomal peptide synthetase; part of the gene cluster that mediates the biosynthesis of penicillin, the world's most important antibiotic. The trimodular NRPS acvA produces the tripeptide N-[(5S)-5-amino-5-carboxypentanoyl]-L-cysteinyl-D-valine (LLD-ACV or ACV) via condensation of the 3 residues L-2-aminoadipate, L-cysteine and L-valine. The precursor amino acids for penicillin biosynthesis are withdrawn from the vacuolar amino acid pool by the MFS-type transporter penV. Each of the constituent amino acids of the tripeptide ACV are activated as aminoacyl-adenylates with peptide bonds formed through the participation of amino acid thioester intermediates. The penicillin biosynthesis occurs via 3 enzymatic steps, the first corresponding to the production of the tripeptide N-[(5S)-5-amino-5-carboxypentanoyl]-L-cysteinyl-D-valine (LLD-ACV or ACV) by the NRPS acvA. The tripeptide ACV is then cyclized to isopenicillin N (IPN) by the isopenicillin N synthase ipnA that forms the beta-lactam nucleus. Finally, the alpha-aminoadipyl side chain is exchanged for phenylacetic acid by the isopenicillin N acyltransferase aatA to yield penicillin in the peroxisomal matrix. The chain is N-(5-amino-5-carboxypentanoyl)-L-cysteinyl-D-valine synthase from Penicillium chrysogenum (Penicillium notatum).